The chain runs to 121 residues: MARIAGVDIPNDKRVVISLTYVYGIGLATSKKILAAAGISEDIRVKDLTSDQEDAIRREVDAIKVEGDLRREVNMNIKRLMEIGSYRGIRHRRGLPVRGQNTKNNARTRKGKAVAIAGKKK.

Residues 96–121 (PVRGQNTKNNARTRKGKAVAIAGKKK) are disordered. Positions 106–121 (ARTRKGKAVAIAGKKK) are enriched in basic residues.

Belongs to the universal ribosomal protein uS13 family. In terms of assembly, part of the 30S ribosomal subunit. Forms a loose heterodimer with protein S19. Forms two bridges to the 50S subunit in the 70S ribosome.

Located at the top of the head of the 30S subunit, it contacts several helices of the 16S rRNA. In the 70S ribosome it contacts the 23S rRNA (bridge B1a) and protein L5 of the 50S subunit (bridge B1b), connecting the 2 subunits; these bridges are implicated in subunit movement. Contacts the tRNAs in the A and P-sites. The chain is Small ribosomal subunit protein uS13 from Streptococcus pyogenes serotype M3 (strain SSI-1).